The chain runs to 1252 residues: Putative late blight resistance protein homolog R1B-11 (1252 aa).

Positions Arg-543–Gln-566 form a coiled coil. NB-ARC domains are found at residues Ser-684 to Ile-736 and Ser-786 to Gly-830. LRR repeat units follow at residues Phe-955–Arg-980, Leu-998–Met-1026, Leu-1077–Ser-1100, Phe-1103–Ala-1125, Phe-1126–Asp-1149, Leu-1187–Ser-1212, and Leu-1213–Ala-1236. The HMA domain occupies Val-1188–Leu-1252.

This sequence belongs to the disease resistance NB-LRR family.

The protein localises to the cytoplasm. It is found in the membrane. Its function is as follows. Confers resistance to late blight (Phytophthora infestans) races carrying the avirulence gene Avr1. Resistance proteins guard the plant against pathogens that contain an appropriate avirulence protein via an indirect interaction with this avirulence protein. That triggers a defense system including the hypersensitive response, which restricts the pathogen growth. The chain is Putative late blight resistance protein homolog R1B-11 (R1B-11) from Solanum demissum (Wild potato).